Reading from the N-terminus, the 76-residue chain is UPF0248 protein PAE2518 (76 aa).

Belongs to the UPF0248 family.

The chain is UPF0248 protein PAE2518 from Pyrobaculum aerophilum (strain ATCC 51768 / DSM 7523 / JCM 9630 / CIP 104966 / NBRC 100827 / IM2).